Here is a 322-residue protein sequence, read N- to C-terminus: Phosphatidylserine decarboxylase proenzyme (322 aa).

Residues aspartate 90, histidine 147, and serine 254 each act as charge relay system; for autoendoproteolytic cleavage activity in the active site. The Schiff-base intermediate with substrate; via pyruvic acid; for decarboxylase activity role is filled by serine 254. A Pyruvic acid (Ser); by autocatalysis modification is found at serine 254. The interval phenylalanine 290 to valine 322 is disordered. A compositionally biased stretch (basic and acidic residues) spans glutamate 308 to valine 322.

The protein belongs to the phosphatidylserine decarboxylase family. PSD-B subfamily. Prokaryotic type I sub-subfamily. As to quaternary structure, heterodimer of a large membrane-associated beta subunit and a small pyruvoyl-containing alpha subunit. It depends on pyruvate as a cofactor. In terms of processing, is synthesized initially as an inactive proenzyme. Formation of the active enzyme involves a self-maturation process in which the active site pyruvoyl group is generated from an internal serine residue via an autocatalytic post-translational modification. Two non-identical subunits are generated from the proenzyme in this reaction, and the pyruvate is formed at the N-terminus of the alpha chain, which is derived from the carboxyl end of the proenzyme. The autoendoproteolytic cleavage occurs by a canonical serine protease mechanism, in which the side chain hydroxyl group of the serine supplies its oxygen atom to form the C-terminus of the beta chain, while the remainder of the serine residue undergoes an oxidative deamination to produce ammonia and the pyruvoyl prosthetic group on the alpha chain. During this reaction, the Ser that is part of the protease active site of the proenzyme becomes the pyruvoyl prosthetic group, which constitutes an essential element of the active site of the mature decarboxylase.

It is found in the cell membrane. It catalyses the reaction a 1,2-diacyl-sn-glycero-3-phospho-L-serine + H(+) = a 1,2-diacyl-sn-glycero-3-phosphoethanolamine + CO2. Its pathway is phospholipid metabolism; phosphatidylethanolamine biosynthesis; phosphatidylethanolamine from CDP-diacylglycerol: step 2/2. In terms of biological role, catalyzes the formation of phosphatidylethanolamine (PtdEtn) from phosphatidylserine (PtdSer). This is Phosphatidylserine decarboxylase proenzyme from Escherichia fergusonii (strain ATCC 35469 / DSM 13698 / CCUG 18766 / IAM 14443 / JCM 21226 / LMG 7866 / NBRC 102419 / NCTC 12128 / CDC 0568-73).